Here is a 161-residue protein sequence, read N- to C-terminus: Anaerobic nitrite reductase HB2 (161 aa).

Residues 5–154 (VFTEKQEALV…LALAIKAEMK (150 aa)) enclose the Globin domain. Residues 38–42 (EIAPA) carry the Homodimerization motif. Residues serine 48, lysine 62, histidine 66, and histidine 101 each contribute to the heme b site. Positions 108 to 120 (DPHFEVVKEALVR) match the Homodimerization motif.

It belongs to the plant globin family. In terms of assembly, homodimer. The cofactor is heme b.

The protein resides in the cytoplasm. It localises to the nucleus. It carries out the reaction Fe(III)-heme b-[protein] + nitric oxide + H2O = Fe(II)-heme b-[protein] + nitrite + 2 H(+). Functionally, phytoglobin that reduces nitrite to nitric oxide (NO) under anoxic conditions (e.g. during flooding or in waterlogged soil). May not function as an oxygen storage or transport protein. Has an unusually high affinity for O(2) through an hexacoordinate heme iron because of a very low dissociation constant. The polypeptide is Anaerobic nitrite reductase HB2 (Brassica napus (Rape)).